We begin with the raw amino-acid sequence, 442 residues long: Elongation factor 1-alpha (442 aa).

The tr-type G domain occupies K6 to V229. The segment at G15 to S22 is G1. G15–S22 provides a ligand contact to GTP. Residue S22 coordinates Mg(2+). Residues G71–D75 form a G2 region. The G3 stretch occupies residues D92–G95. Residues D92–H96 and N154–D157 contribute to the GTP site. The segment at N154–D157 is G4. The segment at S195–W197 is G5.

It belongs to the TRAFAC class translation factor GTPase superfamily. Classic translation factor GTPase family. EF-Tu/EF-1A subfamily.

Its subcellular location is the cytoplasm. The catalysed reaction is GTP + H2O = GDP + phosphate + H(+). Functionally, GTP hydrolase that promotes the GTP-dependent binding of aminoacyl-tRNA to the A-site of ribosomes during protein biosynthesis. This chain is Elongation factor 1-alpha, found in Ignicoccus hospitalis (strain KIN4/I / DSM 18386 / JCM 14125).